Here is a 238-residue protein sequence, read N- to C-terminus: LexA repressor (238 aa).

Residues 26–46 constitute a DNA-binding region (H-T-H motif); that stretch reads FDEMKDALDLRSKSGIHRLIT. Active-site for autocatalytic cleavage activity residues include serine 159 and lysine 197.

This sequence belongs to the peptidase S24 family. As to quaternary structure, homodimer.

It carries out the reaction Hydrolysis of Ala-|-Gly bond in repressor LexA.. Its function is as follows. Represses a number of genes involved in the response to DNA damage (SOS response), including recA and lexA. In the presence of single-stranded DNA, RecA interacts with LexA causing an autocatalytic cleavage which disrupts the DNA-binding part of LexA, leading to derepression of the SOS regulon and eventually DNA repair. This is LexA repressor from Rhodobacter capsulatus (Rhodopseudomonas capsulata).